The following is a 269-amino-acid chain: Putative hydro-lyase Swoo_1731 (269 aa).

The protein belongs to the D-glutamate cyclase family.

The sequence is that of Putative hydro-lyase Swoo_1731 from Shewanella woodyi (strain ATCC 51908 / MS32).